The sequence spans 154 residues: 17 kDa surface antigen (154 aa).

The N-terminal stretch at 1-19 is a signal peptide; sequence MKLLSKIMVIALATSMLQA. The N-palmitoyl cysteine moiety is linked to residue cysteine 20. The S-diacylglycerol cysteine moiety is linked to residue cysteine 20.

It belongs to the rickettsiale 17 kDa surface antigen family.

It localises to the cell outer membrane. This chain is 17 kDa surface antigen (omp), found in Rickettsia parkeri.